A 501-amino-acid polypeptide reads, in one-letter code: L-arabinose isomerase (501 aa).

The Mn(2+) site is built by E306, E333, H350, and H449.

Belongs to the arabinose isomerase family. Mn(2+) is required as a cofactor.

It catalyses the reaction beta-L-arabinopyranose = L-ribulose. The protein operates within carbohydrate degradation; L-arabinose degradation via L-ribulose; D-xylulose 5-phosphate from L-arabinose (bacterial route): step 1/3. Catalyzes the conversion of L-arabinose to L-ribulose. This chain is L-arabinose isomerase, found in Herpetosiphon aurantiacus (strain ATCC 23779 / DSM 785 / 114-95).